The following is a 270-amino-acid chain: S-adenosylmethionine decarboxylase proenzyme (270 aa).

Catalysis depends on serine 117, which acts as the Schiff-base intermediate with substrate; via pyruvic acid. Serine 117 is subject to Pyruvic acid (Ser); by autocatalysis. Histidine 122 serves as the catalytic Proton acceptor; for processing activity. Cysteine 145 functions as the Proton donor; for catalytic activity in the catalytic mechanism.

This sequence belongs to the prokaryotic AdoMetDC family. Type 2 subfamily. Heterooctamer of four alpha and four beta chains arranged as a tetramer of alpha/beta heterodimers. Pyruvate serves as cofactor. In terms of processing, is synthesized initially as an inactive proenzyme. Formation of the active enzyme involves a self-maturation process in which the active site pyruvoyl group is generated from an internal serine residue via an autocatalytic post-translational modification. Two non-identical subunits are generated from the proenzyme in this reaction, and the pyruvate is formed at the N-terminus of the alpha chain, which is derived from the carboxyl end of the proenzyme. The post-translation cleavage follows an unusual pathway, termed non-hydrolytic serinolysis, in which the side chain hydroxyl group of the serine supplies its oxygen atom to form the C-terminus of the beta chain, while the remainder of the serine residue undergoes an oxidative deamination to produce ammonia and the pyruvoyl group blocking the N-terminus of the alpha chain.

It carries out the reaction S-adenosyl-L-methionine + H(+) = S-adenosyl 3-(methylsulfanyl)propylamine + CO2. Its pathway is amine and polyamine biosynthesis; S-adenosylmethioninamine biosynthesis; S-adenosylmethioninamine from S-adenosyl-L-methionine: step 1/1. Catalyzes the decarboxylation of S-adenosylmethionine to S-adenosylmethioninamine (dcAdoMet), the propylamine donor required for the synthesis of the polyamines spermine and spermidine from the diamine putrescine. The chain is S-adenosylmethionine decarboxylase proenzyme from Pseudoalteromonas translucida (strain TAC 125).